A 295-amino-acid chain; its full sequence is Elongation factor Ts (295 aa).

The involved in Mg(2+) ion dislocation from EF-Tu stretch occupies residues 79 to 82 (TDFV).

This sequence belongs to the EF-Ts family.

Its subcellular location is the cytoplasm. Its function is as follows. Associates with the EF-Tu.GDP complex and induces the exchange of GDP to GTP. It remains bound to the aminoacyl-tRNA.EF-Tu.GTP complex up to the GTP hydrolysis stage on the ribosome. The protein is Elongation factor Ts of Bacillus anthracis (strain A0248).